The following is an 80-amino-acid chain: Large ribosomal subunit protein uL29 (80 aa).

It belongs to the universal ribosomal protein uL29 family.

This Saccharopolyspora erythraea (strain ATCC 11635 / DSM 40517 / JCM 4748 / NBRC 13426 / NCIMB 8594 / NRRL 2338) protein is Large ribosomal subunit protein uL29.